Here is a 79-residue protein sequence, read N- to C-terminus: RNA-binding protein Hfq (79 aa).

A Sm domain is found at 10 to 70 (DVFLNTVRKQ…ISTIMPGQPV (61 aa)).

Belongs to the Hfq family. In terms of assembly, homohexamer.

Functionally, RNA chaperone that binds small regulatory RNA (sRNAs) and mRNAs to facilitate mRNA translational regulation in response to envelope stress, environmental stress and changes in metabolite concentrations. Also binds with high specificity to tRNAs. This is RNA-binding protein Hfq from Bartonella henselae (strain ATCC 49882 / DSM 28221 / CCUG 30454 / Houston 1) (Rochalimaea henselae).